Consider the following 970-residue polypeptide: Pentatricopeptide repeat-containing protein At1g18485 (970 aa).

PPR repeat units follow at residues 119 to 149, 150 to 185, 186 to 220, 221 to 251, 252 to 282, 291 to 325, 326 to 356, 357 to 391, 394 to 428, 429 to 459, 460 to 494, 495 to 529, 530 to 560, 561 to 595, 597 to 630, 631 to 661, 662 to 696, 697 to 727, and 733 to 764; these read DDVL…LRSK, NLFQ…DLLP, DHFT…GLVE, DVFV…MPER, NLVS…MMEE, DVAT…RLDK, ELVL…NNNK, NVVS…GEDV, DEVT…EFVY, NELV…IRSK, TVNS…GLLP, DSFT…WLER, DLFV…MEDK, SLVS…GIQL, GISM…LLED, DAFI…LKEK, STAS…GHNP, DDLT…MKSS, and NLKH…MSEE. The type E motif stretch occupies residues 770–845; it reads WKSLLSSCRI…AGCSWIELNR (76 aa). The type E(+) motif stretch occupies residues 846-875; the sequence is KVFSFVVGERFLDGFEEIKSLWSILEMKIS. The segment at 876–970 is type DYW motif; sequence KMGYRPDTMS…NGVCSCGDYW (95 aa).

This sequence belongs to the PPR family. PCMP-H subfamily.

The polypeptide is Pentatricopeptide repeat-containing protein At1g18485 (PCMP-H8) (Arabidopsis thaliana (Mouse-ear cress)).